The primary structure comprises 313 residues: Glyoxylate/hydroxypyruvate reductase A (313 aa).

Residue arginine 228 is part of the active site. Histidine 276 functions as the Proton donor in the catalytic mechanism.

It belongs to the D-isomer specific 2-hydroxyacid dehydrogenase family. GhrA subfamily.

It is found in the cytoplasm. The catalysed reaction is glycolate + NADP(+) = glyoxylate + NADPH + H(+). It carries out the reaction (R)-glycerate + NAD(+) = 3-hydroxypyruvate + NADH + H(+). The enzyme catalyses (R)-glycerate + NADP(+) = 3-hydroxypyruvate + NADPH + H(+). Catalyzes the NADPH-dependent reduction of glyoxylate and hydroxypyruvate into glycolate and glycerate, respectively. This chain is Glyoxylate/hydroxypyruvate reductase A, found in Photorhabdus laumondii subsp. laumondii (strain DSM 15139 / CIP 105565 / TT01) (Photorhabdus luminescens subsp. laumondii).